The following is a 768-amino-acid chain: Protein transport protein Sec23A (768 aa).

An N-acetylthreonine modification is found at Thr-2. Positions 61, 66, 85, and 88 each coordinate Zn(2+). Thr-308 carries the phosphothreonine modification. Residues 632–718 form a Gelsolin-like repeat; sequence PEPVLLDSSS…EHGGSQARFL (87 aa).

The protein belongs to the SEC23/SEC24 family. SEC23 subfamily. COPII is composed of at least five proteins: the Sec23/24 complex, the Sec13/31 complex and Sar1. Interacts with SEC23IP. Interacts with HTR4. Interacts with SEC16A. Interacts with SLC6A4. Interacts (as part of the Sec23/24 complex) with SEC22B; recruits SEC22B into COPII-coated vesicles and allows the transport of this cargo from the endoplasmic reticulum to the Golgi. Interacts (via Gelsolin-like repeat) with MIA2 and MIA3; specifically involved in the transport of large cargos like the collagen COL7A1. Interacts with DDHD1. Interacts with TMEM39A. Interacts with SACM1L; this interaction is reduced in the absence of TMEM39A. Interacts with kinase FAM20C; transport of FAM20C from the endoplasmic reticulum to the Golgi is likely to be mediated by COPII vesicles.

The protein resides in the cytoplasmic vesicle. The protein localises to the COPII-coated vesicle membrane. Its subcellular location is the endoplasmic reticulum membrane. It is found in the cytoplasm. It localises to the cytosol. In terms of biological role, component of the coat protein complex II (COPII) which promotes the formation of transport vesicles from the endoplasmic reticulum (ER). The coat has two main functions, the physical deformation of the endoplasmic reticulum membrane into vesicles and the selection of cargo molecules for their transport to the Golgi complex. Required for the translocation of insulin-induced glucose transporter SLC2A4/GLUT4 to the cell membrane. The sequence is that of Protein transport protein Sec23A from Bos taurus (Bovine).